A 152-amino-acid polypeptide reads, in one-letter code: Deoxyuridine 5'-triphosphate nucleotidohydrolase (152 aa).

Substrate is bound by residues 71–73 (RSG), asparagine 84, 88–90 (LVD), and methionine 98.

It belongs to the dUTPase family. It depends on Mg(2+) as a cofactor.

The catalysed reaction is dUTP + H2O = dUMP + diphosphate + H(+). Its pathway is pyrimidine metabolism; dUMP biosynthesis; dUMP from dCTP (dUTP route): step 2/2. In terms of biological role, this enzyme is involved in nucleotide metabolism: it produces dUMP, the immediate precursor of thymidine nucleotides and it decreases the intracellular concentration of dUTP so that uracil cannot be incorporated into DNA. The polypeptide is Deoxyuridine 5'-triphosphate nucleotidohydrolase (Shewanella oneidensis (strain ATCC 700550 / JCM 31522 / CIP 106686 / LMG 19005 / NCIMB 14063 / MR-1)).